Reading from the N-terminus, the 383-residue chain is MGLGPVFLLLAGIFPFAPPGAAAEPHSLRYNLTVLSWDGSVQSGFLTEVHLDGQPFLRCDRQKCRAKPQGQWAEDVLGNKTWDRETRDLTGNGKDLRMTLAHIKDQKEGLHSLQEIRVCEIHEDNSTRSSQHFYYDGELFLSQNLETKEWTMPQSSRAQTLAMNVRNFLKEDAMKTKTHYHAMHADCLQELRRYLKSGVVLRRTVPPMVNVTRSEASEGNITVTCRASGFYPWNITLSWRQDGVSLSHDTQQWGDVLPDGNGTYQTWVATRICQGEEQRFTCYMEHSGNHSTHPVPSGKVLVLQSHWQTFHVSAVAAAAIFVIIIFYVRCCKKKTSAAEGPELVSLQVLDQHPVGTSDHRDATQLGFQPLMSDLGSTGSTEGA.

The signal sequence occupies residues 1–23 (MGLGPVFLLLAGIFPFAPPGAAA). Topologically, residues 24-307 (EPHSLRYNLT…GKVLVLQSHW (284 aa)) are extracellular. Asn31 carries N-linked (GlcNAc...) asparagine glycosylation. Cysteines 59 and 64 form a disulfide. The N-linked (GlcNAc...) asparagine glycan is linked to Asn79. Cys119 and Cys187 are joined by a disulfide. The Ig-like C1-type domain occupies 207 to 296 (PMVNVTRSEA…SGNHSTHPVP (90 aa)). 3 N-linked (GlcNAc...) asparagine glycosylation sites follow: Asn210, Asn220, and Asn261. Residues Cys225 and Cys282 are joined by a disulfide bond. The helical transmembrane segment at 308 to 328 (QTFHVSAVAAAAIFVIIIFYV) threads the bilayer. At 329 to 383 (RCCKKKTSAAEGPELVSLQVLDQHPVGTSDHRDATQLGFQPLMSDLGSTGSTEGA) the chain is on the cytoplasmic side. S-palmitoyl cysteine attachment occurs at residues Cys330 and Cys331.

This sequence belongs to the MHC class I family. MIC subfamily. As to quaternary structure, unlike classical MHC class I molecules, does not form a heterodimer with beta-2-microglobulin. Binds as a monomer to a KLRK1/NKG2D homodimer. KLRK1 forms a complex with HCST/DAP10 in which KLRK1 binds MICA while HCST acts as an adapter molecule which enables signal transduction. Interacts with PDIA6 on the surface of tumor cells, leading to disulfide bond reduction which is required for release of MICA from tumor cells. (Microbial infection) Interacts with human cytomegalovirus/HHV-5 protein UL142. In terms of processing, N-glycosylated. Glycosylation is not essential for interaction with KLRK1/NKG2D but enhances complex formation. Proteolytically cleaved and released from the cell surface of tumor cells which impairs KLRK1/NKG2D expression and T-cell activation. Post-translationally, palmitoylated on cysteine residues in the cytoplasmic tail leading to its association with membrane microdomains enriched in cholesterol. In terms of processing, N-glycosylation is necessary for cell surface expression. (Microbial infection) Ubiquitinated by human herpesvirus 8 protein K5, leading to degradation. In terms of tissue distribution, widely expressed with the exception of the central nervous system where it is absent. Expressed predominantly in gastric epithelium and also in monocytes, keratinocytes, endothelial cells, fibroblasts and in the outer layer of Hassal's corpuscles within the medulla of normal thymus. In skin, expressed mainly in the keratin layers, basal cells, ducts and follicles. Also expressed in many, but not all, epithelial tumors of lung, breast, kidney, ovary, prostate and colon. In thyomas, overexpressed in cortical and medullar epithelial cells. Tumors expressing MICA display increased levels of gamma delta T-cells.

Its subcellular location is the cell membrane. It localises to the cytoplasm. Functionally, widely expressed membrane-bound protein which acts as a ligand to stimulate an activating receptor KLRK1/NKG2D, expressed on the surface of essentially all human natural killer (NK), gammadelta T and CD8 alphabeta T-cells. Up-regulated in stressed conditions, such as viral and bacterial infections or DNA damage response, serves as signal of cellular stress, and engagement of KLRK1/NKG2D by MICA triggers NK-cells resulting in a range of immune effector functions, such as cytotoxicity and cytokine production. This Homo sapiens (Human) protein is MHC class I polypeptide-related sequence A.